A 374-amino-acid chain; its full sequence is MGAAKNIWALANAEDAANDAEQIPYSSFVVDTSLPLPLMIPRIIELCKDLFKNWGELDDSLFSVERVSGGITNLLLKVSVKEDTNKEVSVTVRLYGPNTEYVINREREILAIKYLSAAGFGAKLLGGFGNGMVQSFINARTLEPSDMREPKIAAQIARELGKFHKVDIPGSKEPQLWVDILKFYEKASTLTFEEPDKQKLFETISFEELHKEIIELREFTGLLNAPVVFAHNDLLSGNFMLNDEEEKLYLIDFEYGSYNYRGFDIGNHFNEYAGYDCDYSLYPSKEEQYHFIKHYLQPDKPDEVSIAEVESVFVETDAYKLASHLYWAIWAIIQARMSPIEFEYLGYFFLRYNEYKKQKPLTFSLVTSHLSASL.

Residues Arg-93 and Asp-252 each coordinate ATP.

Belongs to the choline/ethanolamine kinase family.

It carries out the reaction ethanolamine + ATP = phosphoethanolamine + ADP + H(+). It functions in the pathway phospholipid metabolism; phosphatidylethanolamine biosynthesis; phosphatidylethanolamine from ethanolamine: step 1/3. Functionally, involved in phospholipid biosynthesis. Catalyzes the first step in phosphatidylethanolamine biosynthesis. The chain is Probable ethanolamine kinase (EMB1187) from Arabidopsis thaliana (Mouse-ear cress).